The primary structure comprises 397 residues: Na(+)/H(+) antiporter NhaA 2 (397 aa).

11 helical membrane passes run 9 to 29, 59 to 79, 95 to 115, 125 to 145, 154 to 174, 177 to 197, 222 to 242, 260 to 280, 292 to 312, 332 to 352, and 371 to 391; these read LHNP…AMAV, LLLW…GLEL, ILPV…YTLI, GWAI…ALLG, LFLL…IAFF, SELS…LILM, SGVH…LKGE, VVGL…SLQG, LGIA…FVWL, GVAL…SLAF, and LGIL…LRFS.

This sequence belongs to the NhaA Na(+)/H(+) (TC 2.A.33) antiporter family.

The protein localises to the cell inner membrane. It catalyses the reaction Na(+)(in) + 2 H(+)(out) = Na(+)(out) + 2 H(+)(in). Na(+)/H(+) antiporter that extrudes sodium in exchange for external protons. This chain is Na(+)/H(+) antiporter NhaA 2, found in Magnetococcus marinus (strain ATCC BAA-1437 / JCM 17883 / MC-1).